A 705-amino-acid polypeptide reads, in one-letter code: Double-strand break repair protein MRE11 (705 aa).

The Mn(2+) site is built by Asp-15, His-17, Asp-55, and Asn-122. The Proton donor role is filled by His-123. Residues His-220, His-248, and His-250 each coordinate Mn(2+). A compositionally biased stretch (basic and acidic residues) spans 505 to 514 (RSLRSKEDSR). The tract at residues 505-705 (RSLRSKEDSR…TRNYGAVRRR (201 aa)) is disordered. 2 stretches are compositionally biased toward polar residues: residues 515-538 (FTSS…LNSF) and 589-605 (SMKQ…SSAA). Residues 641–663 (GRKRAAPRGGRGRGRGATAKRGR) are compositionally biased toward basic residues.

Belongs to the MRE11/RAD32 family. In terms of assembly, component of the MRN complex composed of two heterodimers RAD50/MRE11 associated with a single NBS1. Mn(2+) is required as a cofactor.

The protein localises to the nucleus. The protein resides in the chromosome. Core component of the MRN complex, which plays a central role in double-strand break (DSB) repair, DNA recombination, maintenance of telomere integrity and meiosis. The MRN complex is involved in the repair of DNA double-strand breaks (DSBs) via homologous recombination (HR), an error-free mechanism which primarily occurs during S and G2 phases. The complex (1) mediates the end resection of damaged DNA, which generates proper single-stranded DNA, a key initial steps in HR, and is (2) required for the recruitment of other repair factors and efficient activation of ATM and ATR upon DNA damage. Within the MRN complex, MRE11 possesses both single-strand endonuclease activity and double-strand-specific 3'-5' exonuclease activity. MRE11 first endonucleolytically cleaves the 5' strand at DNA DSB ends to prevent non-homologous end joining (NHEJ) and licence HR. It then generates a single-stranded DNA gap via 3' to 5' exonucleolytic degradation, which is required for single-strand invasion and recombination. This chain is Double-strand break repair protein MRE11, found in Oryza sativa subsp. indica (Rice).